Consider the following 426-residue polypeptide: Glutamate-1-semialdehyde 2,1-aminomutase (426 aa).

The residue at position 265 (lysine 265) is an N6-(pyridoxal phosphate)lysine.

The protein belongs to the class-III pyridoxal-phosphate-dependent aminotransferase family. HemL subfamily. As to quaternary structure, homodimer. It depends on pyridoxal 5'-phosphate as a cofactor.

The protein localises to the cytoplasm. It carries out the reaction (S)-4-amino-5-oxopentanoate = 5-aminolevulinate. It functions in the pathway porphyrin-containing compound metabolism; protoporphyrin-IX biosynthesis; 5-aminolevulinate from L-glutamyl-tRNA(Glu): step 2/2. This chain is Glutamate-1-semialdehyde 2,1-aminomutase, found in Escherichia coli (strain SMS-3-5 / SECEC).